We begin with the raw amino-acid sequence, 220 residues long: Ribosomal RNA large subunit methyltransferase E (220 aa).

The segment covering 1–10 (MSRSGKDPGK) has biased composition (basic and acidic residues). The disordered stretch occupies residues 1–24 (MSRSGKDPGKRVKTARKRSASSTR). S-adenosyl-L-methionine is bound by residues Gly75, Trp77, Asp94, Asp110, and Asp134. Catalysis depends on Lys174, which acts as the Proton acceptor.

The protein belongs to the class I-like SAM-binding methyltransferase superfamily. RNA methyltransferase RlmE family.

It localises to the cytoplasm. It carries out the reaction uridine(2552) in 23S rRNA + S-adenosyl-L-methionine = 2'-O-methyluridine(2552) in 23S rRNA + S-adenosyl-L-homocysteine + H(+). Its function is as follows. Specifically methylates the uridine in position 2552 of 23S rRNA at the 2'-O position of the ribose in the fully assembled 50S ribosomal subunit. This Erythrobacter litoralis (strain HTCC2594) protein is Ribosomal RNA large subunit methyltransferase E.